We begin with the raw amino-acid sequence, 582 residues long: 5-aminolevulinate synthase, erythroid-specific, mitochondrial (582 aa).

Arginine 158 provides a ligand contact to succinyl-CoA. Pyridoxal 5'-phosphate contacts are provided by cysteine 253 and phenylalanine 254. Residues serine 275 and arginine 294 each coordinate succinyl-CoA. Positions 327, 355, and 383 each coordinate pyridoxal 5'-phosphate. The active site involves lysine 386. Lysine 386 is subject to N6-(pyridoxal phosphate)lysine. The pyridoxal 5'-phosphate site is built by threonine 415 and threonine 416. Threonine 503 is a binding site for succinyl-CoA.

Belongs to the class-II pyridoxal-phosphate-dependent aminotransferase family. In terms of assembly, homodimer. It depends on pyridoxal 5'-phosphate as a cofactor.

The protein resides in the mitochondrion inner membrane. It carries out the reaction succinyl-CoA + glycine + H(+) = 5-aminolevulinate + CO2 + CoA. It participates in porphyrin-containing compound metabolism; protoporphyrin-IX biosynthesis; 5-aminolevulinate from glycine: step 1/1. In terms of biological role, catalyzes the pyridoxal 5'-phosphate (PLP)-dependent condensation of succinyl-CoA and glycine to form aminolevulinic acid (ALA), with CoA and CO2 as by-products. Contributes significantly to heme formation during erythropoiesis. The chain is 5-aminolevulinate synthase, erythroid-specific, mitochondrial (alas2) from Opsanus tau (Oyster toadfish).